The following is a 296-amino-acid chain: tRNA dimethylallyltransferase (296 aa).

8–15 lines the ATP pocket; that stretch reads GPTGSGKT. 10 to 15 contributes to the substrate binding site; sequence TGSGKT. Residues 32 to 35 form an interaction with substrate tRNA region; that stretch reads DSRQ.

Belongs to the IPP transferase family. In terms of assembly, monomer. Mg(2+) is required as a cofactor.

It carries out the reaction adenosine(37) in tRNA + dimethylallyl diphosphate = N(6)-dimethylallyladenosine(37) in tRNA + diphosphate. Functionally, catalyzes the transfer of a dimethylallyl group onto the adenine at position 37 in tRNAs that read codons beginning with uridine, leading to the formation of N6-(dimethylallyl)adenosine (i(6)A). The protein is tRNA dimethylallyltransferase of Leptospira biflexa serovar Patoc (strain Patoc 1 / Ames).